The primary structure comprises 548 residues: Protein GPR108 (548 aa).

Residues 1–32 (MAVSERRGLGRGSPAEWGPWLLLLLLLGGSSG) form the signal peptide. N-linked (GlcNAc...) asparagine glycans are attached at residues asparagine 57, asparagine 63, and asparagine 109. The segment at 165–190 (DHAGTTAAPDKAKSKPTGLQGDRQGV) is disordered. Asparagine 205 and asparagine 209 each carry an N-linked (GlcNAc...) asparagine glycan. 7 consecutive transmembrane segments (helical) span residues 268 to 288 (LYMV…SILC), 297 to 317 (IHWL…FHSI), 341 to 361 (LLKG…WAFV), 372 to 392 (IFGI…VMES), 406 to 426 (ILFL…VWSI), 454 to 474 (VMVI…RAVV), and 478 to 498 (WQWL…VLTG). N-linked (GlcNAc...) asparagine glycosylation occurs at asparagine 539.

It belongs to the LU7TM family.

The protein localises to the golgi apparatus. It localises to the cis-Golgi network membrane. It is found in the trans-Golgi network membrane. Its subcellular location is the golgi apparatus membrane. Its function is as follows. May play a role in intracellular immune modulation by activating NF-kappaB response and attenuating Toll-like-receptor response. This chain is Protein GPR108 (GPR108), found in Bos taurus (Bovine).